Here is a 139-residue protein sequence, read N- to C-terminus: Spermatogenesis-associated protein 33 (139 aa).

The interaction with ATG16L1 stretch occupies residues 1-67 (MVTHAAGART…TAKHPPPAAS (67 aa)). Residues 1–83 (MVTHAAGART…VKQKSSRKKV (83 aa)) form a disordered region. Residues 25 to 50 (KSKEKLMEKHSQEARQADRESEKPVD) show a composition bias toward basic and acidic residues. Residues 68-139 (LEEKPDVKQK…ADAYNSHLKE (72 aa)) form an interaction with VDAC2 region. Residues 86-91 (PQIIIT) carry the PQIIIT motif. Residue Ser94 is modified to Phosphoserine. Positions 97 to 109 (TLVSCSSSGSDQQ) are enriched in polar residues. The segment at 97–139 (TLVSCSSSGSDQQRTIREPEDWGPYRRHRNPSTADAYNSHLKE) is disordered. Residues 110 to 120 (RTIREPEDWGP) are compositionally biased toward basic and acidic residues.

As to quaternary structure, interacts (via PQIIIT motif) with PPP3R1, PPP3R2, PPP3CA, PPP3CB and PPP3CC. Interacts with VDAC2. Interacts with ATG16L1 (via WD repeats).

Its subcellular location is the cytoplasm. The protein localises to the cytosol. It is found in the nucleus. The protein resides in the mitochondrion. In terms of biological role, plays an important role in sperm motility and male fertility. Required for sperm midpiece flexibility and for the localization of sperm calcineurin to the mitochondria. Promotes mitophagy as well as acts as an autophagy mediator in male germline cells. Links damaged mitochondria to autophagosomes via its binding to the outer mitochondrial membrane protein VDAC2, as well as to key autophagy machinery component ATG16L1. This chain is Spermatogenesis-associated protein 33 (SPATA33), found in Homo sapiens (Human).